The following is a 1070-amino-acid chain: DNA-directed RNA polymerase subunit beta (1070 aa).

Belongs to the RNA polymerase beta chain family. In terms of assembly, in plastids the minimal PEP RNA polymerase catalytic core is composed of four subunits: alpha, beta, beta', and beta''. When a (nuclear-encoded) sigma factor is associated with the core the holoenzyme is formed, which can initiate transcription.

It is found in the plastid. The protein resides in the chloroplast. The enzyme catalyses RNA(n) + a ribonucleoside 5'-triphosphate = RNA(n+1) + diphosphate. Its function is as follows. DNA-dependent RNA polymerase catalyzes the transcription of DNA into RNA using the four ribonucleoside triphosphates as substrates. This Liriodendron tulipifera (Tuliptree) protein is DNA-directed RNA polymerase subunit beta.